The sequence spans 119 residues: Large ribosomal subunit protein bL20 (119 aa).

The protein belongs to the bacterial ribosomal protein bL20 family.

Its function is as follows. Binds directly to 23S ribosomal RNA and is necessary for the in vitro assembly process of the 50S ribosomal subunit. It is not involved in the protein synthesizing functions of that subunit. This chain is Large ribosomal subunit protein bL20, found in Thiobacillus denitrificans (strain ATCC 25259 / T1).